The sequence spans 360 residues: Peptide chain release factor 1 (360 aa).

Glutamine 235 is subject to N5-methylglutamine. A disordered region spans residues 285–313 (KRQQAEASTRRNLLGSGDRSDRNRTYNFP).

This sequence belongs to the prokaryotic/mitochondrial release factor family. In terms of processing, methylated by PrmC. Methylation increases the termination efficiency of RF1.

It localises to the cytoplasm. Its function is as follows. Peptide chain release factor 1 directs the termination of translation in response to the peptide chain termination codons UAG and UAA. This Enterobacter sp. (strain 638) protein is Peptide chain release factor 1.